The following is an 844-amino-acid chain: 3',5'-cyclic-AMP phosphodiesterase 4A (844 aa).

Residues 1 to 124 (MEPPAAPSER…RSPLDSQASP (124 aa)) are disordered. Residue S13 is modified to Phosphoserine. Low complexity predominate over residues 36–46 (QPRTPIRIQQR). Residues 51–78 (SAERSEPERSPHRPIERADAVDTGDRPG) are compositionally biased toward basic and acidic residues. Residues 82 to 91 (TRMSWPSSFH) are compositionally biased toward polar residues. Residues S147, S152, S160, S204, and S333 each carry the phosphoserine modification. The PDEase domain occupies 343-672 (VKTDQEDLLA…DWYHSAIRQS (330 aa)). K344 is covalently cross-linked (Glycyl lysine isopeptide (Lys-Gly) (interchain with G-Cter in SUMO)). Residue H419 is the Proton donor of the active site. H419 is a 3',5'-cyclic AMP binding site. Residues H419 and H423 each contribute to the AMP site. Residues H423, H459, D460, and D577 each contribute to the Zn(2+) site. D460, D577, Q628, and F631 together coordinate AMP. D460 is a Mg(2+) binding site. Position 460 (D460) interacts with Mn(2+). 3',5'-cyclic AMP is bound by residues Q628 and F631. S672 and S674 each carry phosphoserine. The segment at 819–844 (ACSGTSGDNSAVISAPGRWGSGGDPA) is disordered. Over residues 820–830 (CSGTSGDNSAV) the composition is skewed to polar residues.

This sequence belongs to the cyclic nucleotide phosphodiesterase family. PDE4 subfamily. Interacts with LYN (via SH3 domain). Interacts with ARRB2. Zn(2+) serves as cofactor. It depends on Mg(2+) as a cofactor. The cofactor is Mn(2+). Post-translationally, proteolytically cleaved by CASP3.

Its subcellular location is the cytoplasm. It localises to the cytosol. It is found in the membrane. It carries out the reaction 3',5'-cyclic AMP + H2O = AMP + H(+). It participates in purine metabolism; 3',5'-cyclic AMP degradation; AMP from 3',5'-cyclic AMP: step 1/1. Its activity is regulated as follows. Inhibited by rolipram and diazepam. Its function is as follows. Hydrolyzes the second messenger 3',5'-cyclic AMP (cAMP), which is a key regulator of many important physiological processes. Efficiently hydrolyzes cAMP. The sequence is that of 3',5'-cyclic-AMP phosphodiesterase 4A (Pde4a) from Mus musculus (Mouse).